Reading from the N-terminus, the 344-residue chain is Dihydroorotase (344 aa).

The Zn(2+) site is built by histidine 13 and histidine 15. Residues 15-17 (HFR) and asparagine 41 each bind substrate. 3 residues coordinate Zn(2+): lysine 98, histidine 135, and histidine 173. Lysine 98 bears the N6-carboxylysine mark. Histidine 135 lines the substrate pocket. Leucine 218 contributes to the substrate binding site. Zn(2+) is bound at residue aspartate 246. Aspartate 246 is an active-site residue. The substrate site is built by histidine 250 and alanine 262.

It belongs to the metallo-dependent hydrolases superfamily. DHOase family. Class II DHOase subfamily. Homodimer. Requires Zn(2+) as cofactor.

It catalyses the reaction (S)-dihydroorotate + H2O = N-carbamoyl-L-aspartate + H(+). It functions in the pathway pyrimidine metabolism; UMP biosynthesis via de novo pathway; (S)-dihydroorotate from bicarbonate: step 3/3. Catalyzes the reversible cyclization of carbamoyl aspartate to dihydroorotate. The protein is Dihydroorotase of Pseudoalteromonas atlantica (strain T6c / ATCC BAA-1087).